A 277-amino-acid chain; its full sequence is Phosphate import ATP-binding protein PstB (277 aa).

An ABC transporter domain is found at 31 to 272 (IEVPGLSLYY…PAKKQTEDYI (242 aa)). Residue 63 to 70 (GPSGCGKS) coordinates ATP.

The protein belongs to the ABC transporter superfamily. Phosphate importer (TC 3.A.1.7) family. In terms of assembly, the complex is composed of two ATP-binding proteins (PstB), two transmembrane proteins (PstC and PstA) and a solute-binding protein (PstS).

It is found in the cell inner membrane. It catalyses the reaction phosphate(out) + ATP + H2O = ADP + 2 phosphate(in) + H(+). Part of the ABC transporter complex PstSACB involved in phosphate import. Responsible for energy coupling to the transport system. The polypeptide is Phosphate import ATP-binding protein PstB (Pseudomonas fluorescens (strain ATCC BAA-477 / NRRL B-23932 / Pf-5)).